A 303-amino-acid polypeptide reads, in one-letter code: Glycine--tRNA ligase alpha subunit (303 aa).

Belongs to the class-II aminoacyl-tRNA synthetase family. In terms of assembly, tetramer of two alpha and two beta subunits.

Its subcellular location is the cytoplasm. It carries out the reaction tRNA(Gly) + glycine + ATP = glycyl-tRNA(Gly) + AMP + diphosphate. In Stenotrophomonas maltophilia (strain R551-3), this protein is Glycine--tRNA ligase alpha subunit.